The following is a 470-amino-acid chain: Dendritic cell-specific transmembrane protein (470 aa).

Over 1–33 (MRLWTLGTSIFLRLWGTYVFPRSPSWLDFIQHL) the chain is Cytoplasmic. The chain crosses the membrane as a helical span at residues 34–54 (GVCCFVAFLSVSLFSAAFYWI). Position 55 (leucine 55) is a topological domain, extracellular. Residues 56–76 (PPVALLSSVWMITCVFLCCSK) form a helical membrane-spanning segment. The Cytoplasmic segment spans residues 77–97 (RARCFILLAVLSCGLREGRNA). A helical membrane pass occupies residues 98–118 (LIAAGTGVVIFGHVENIFYNF). Over 119–209 (RGLLDSMTCN…MVVTTELLTS (91 aa)) the chain is Extracellular. A helical membrane pass occupies residues 210–230 (VGQKLLALAGLLLILVSTGLF). Topologically, residues 231 to 292 (LKRFLGPCGW…LQLTPKEKKT (62 aa)) are cytoplasmic. The chain crosses the membrane as a helical span at residues 293 to 313 (LGLFFLPVLTYLYMWVLFAAV). The Extracellular segment spans residues 314-376 (DYLLYRLISS…PKPRLSVSET (63 aa)). A helical transmembrane segment spans residues 377 to 397 (WVPLSIILLTLIILGLLSSML). At 398–470 (MQLKILVSVS…QTIPANEDDL (73 aa)) the chain is on the cytoplasmic side.

Interacts with CREB3. Monomer. Homodimer. Isoform 1 interacts (via the C-terminus cytoplasmic tail) with OS9 isoform 1 (via the C-terminus tail); the interaction induces DCSTAMP redistribution to the endoplasmic reticulum-Golgi intermediate compartment. Isoform 1 interacts (via the C-terminus cytoplasmic tail) with OS9 isoform 2 (via the C-terminus tail). In terms of processing, glycosylated. As to expression, expressed in macrophages and bone marrow dendritic cells (BM-DC). Weakly expressed in the spleen and lymph node. Highly expressed in multi-nuclear osteoclasts compared to mono-nuclear macrophages. Expressed in foreign body giant cells (FBGCs). Isoform 1 and isoform 2 are expressed in osteoclasts.

It is found in the cell membrane. It localises to the endoplasmic reticulum membrane. The protein localises to the endoplasmic reticulum-Golgi intermediate compartment membrane. Its subcellular location is the endosome. Functionally, probable cell surface receptor that plays several roles in cellular fusion, cell differentiation, bone and immune homeostasis. Plays a role in TNFSF11-mediated osteoclastogenesis. Cooperates with OCSTAMP in modulating cell-cell fusion in both osteoclasts and foreign body giant cells (FBGCs). Participates in osteoclast bone resorption. Involved in inducing the expression of tartrate-resistant acid phosphatase in osteoclast precursors. Plays a role in haematopoietic stem cell differentiation of bone marrow cells toward the myeloid lineage. Inhibits the development of neutrophilic granulocytes. Plays also a role in the regulation of dendritic cell (DC) antigen presentation activity by controlling phagocytic activity. Involved in the maintenance of immune self-tolerance and avoidance of autoimmune reactions. The polypeptide is Dendritic cell-specific transmembrane protein (Dcstamp) (Mus musculus (Mouse)).